A 458-amino-acid polypeptide reads, in one-letter code: UDP-N-acetylmuramate--L-alanine ligase (458 aa).

ATP is bound at residue 118-124 (GTHGKTT).

The protein belongs to the MurCDEF family.

The protein resides in the cytoplasm. It catalyses the reaction UDP-N-acetyl-alpha-D-muramate + L-alanine + ATP = UDP-N-acetyl-alpha-D-muramoyl-L-alanine + ADP + phosphate + H(+). The protein operates within cell wall biogenesis; peptidoglycan biosynthesis. Its function is as follows. Cell wall formation. The protein is UDP-N-acetylmuramate--L-alanine ligase of Clostridium novyi (strain NT).